A 366-amino-acid chain; its full sequence is Probable trehalose-phosphate phosphatase 3 (366 aa).

The protein belongs to the trehalose phosphatase family. The cofactor is a divalent metal cation.

It carries out the reaction alpha,alpha-trehalose 6-phosphate + H2O = alpha,alpha-trehalose + phosphate. Its pathway is glycan biosynthesis; trehalose biosynthesis. In terms of biological role, removes the phosphate from trehalose 6-phosphate to produce free trehalose. Trehalose accumulation in plant may improve abiotic stress tolerance. In Oryza sativa subsp. japonica (Rice), this protein is Probable trehalose-phosphate phosphatase 3 (TPP3).